Consider the following 534-residue polypeptide: Echilunin cytochrome P450 monooxygenase (534 aa).

The helical transmembrane segment at 18-38 (VSPAALSWAVVAIYLGTFFWL) threads the bilayer. A heme-binding site is contributed by Cys-441.

This sequence belongs to the cytochrome P450 family. It depends on heme as a cofactor.

It localises to the membrane. The catalysed reaction is preechinulin + reduced [NADPH--hemoprotein reductase] + O2 = neoechinulin A + oxidized [NADPH--hemoprotein reductase] + 2 H2O + H(+). It functions in the pathway secondary metabolite biosynthesis. Its pathway is alkaloid biosynthesis. In terms of biological role, cytochrome P450 monooxygenase; part of the gene cluster that mediates the biosynthesis of echinulin family alkaloid. The pathway begins with the biosynthesis of the cyclic dipeptide cyclo-L-Trp-L-Ala (cyclo-TA) by the NRPS echPS via condensation of L-alanine and L-tryptophan. The prenyltransferase echPT1 then catalyzes the first prenylation step, a reverse prenylation reaction at C2, to yield preechinulin. Preechinulin is the substrate of the cytochrome P450 monooxygenase echP450 that catalyzes the formation of the double bond between C10 and C11 to produce neoechulin A. The unique prenyltransferase echPT2 functions as a competitive enzyme with echP450 for preechinulin metabolization and uses preechinulin for effective regiospecific prenylations. Preechinulin is prenylated by echPT2 at C5 or C7. C7-prenylation leads to accumulation of tardioxopiperazine B without further modification by echPT2. In contrast, the C5-prenylated tardioxopiperazine A can be prenylated again by echPT2, predominantly at C7 to form echinulin or less frequently at C4 to give variecolorin L. EchPT2 also accepts neoechilunin A to produce varlecolorin G (prenylation at C5) or isoechinulin A (prenylation at C7). EchPT2 further converts isoechinulin A into dehydroechinulin. Moreover, a yet unidentified enzyme can also convert neoechilunin A into neoechilunin B by introducing a double bond between positions C14 and C17 and thus provides a further substrate to echPT2 for C5 and C7 prenylation. This is Echilunin cytochrome P450 monooxygenase from Aspergillus ruber (strain CBS 135680).